A 94-amino-acid polypeptide reads, in one-letter code: Large ribosomal subunit protein bL25 (94 aa).

Belongs to the bacterial ribosomal protein bL25 family. Part of the 50S ribosomal subunit; part of the 5S rRNA/L5/L18/L25 subcomplex. Contacts the 5S rRNA. Binds to the 5S rRNA independently of L5 and L18.

Functionally, this is one of the proteins that binds to the 5S RNA in the ribosome where it forms part of the central protuberance. This chain is Large ribosomal subunit protein bL25, found in Yersinia pestis bv. Antiqua (strain Antiqua).